Consider the following 144-residue polypeptide: Ribonuclease VapC1 (144 aa).

The PINc domain occupies 6–132; sequence VFVDGNVIVD…SFYSPDIEVL (127 aa). Positions 9 and 102 each coordinate Mg(2+).

This sequence belongs to the PINc/VapC protein family. It depends on Mg(2+) as a cofactor.

Functionally, toxic component of a type II toxin-antitoxin (TA) system. An RNase. In Aquifex aeolicus (strain VF5), this protein is Ribonuclease VapC1.